The chain runs to 574 residues: Proline--tRNA ligase (574 aa).

The protein belongs to the class-II aminoacyl-tRNA synthetase family. ProS type 1 subfamily. In terms of assembly, homodimer.

It localises to the cytoplasm. It catalyses the reaction tRNA(Pro) + L-proline + ATP = L-prolyl-tRNA(Pro) + AMP + diphosphate. In terms of biological role, catalyzes the attachment of proline to tRNA(Pro) in a two-step reaction: proline is first activated by ATP to form Pro-AMP and then transferred to the acceptor end of tRNA(Pro). As ProRS can inadvertently accommodate and process non-cognate amino acids such as alanine and cysteine, to avoid such errors it has two additional distinct editing activities against alanine. One activity is designated as 'pretransfer' editing and involves the tRNA(Pro)-independent hydrolysis of activated Ala-AMP. The other activity is designated 'posttransfer' editing and involves deacylation of mischarged Ala-tRNA(Pro). The misacylated Cys-tRNA(Pro) is not edited by ProRS. The polypeptide is Proline--tRNA ligase (Ralstonia nicotianae (strain ATCC BAA-1114 / GMI1000) (Ralstonia solanacearum)).